We begin with the raw amino-acid sequence, 70 residues long: Putative membrane protein insertion efficiency factor (70 aa).

Belongs to the UPF0161 family.

It localises to the cell membrane. Could be involved in insertion of integral membrane proteins into the membrane. The sequence is that of Putative membrane protein insertion efficiency factor from Lachnoclostridium phytofermentans (strain ATCC 700394 / DSM 18823 / ISDg) (Clostridium phytofermentans).